A 299-amino-acid polypeptide reads, in one-letter code: Probable lipid kinase YegS (299 aa).

Positions 2–133 constitute a DAGKc domain; that stretch reads AEFPASLLIL…IDMAQVNKQT (132 aa). ATP contacts are provided by residues Thr-40, 66–72, and Thr-95; that span reads GDGTINE. The Mg(2+) site is built by Leu-215, Asp-218, and Leu-220. Glu-271 serves as the catalytic Proton acceptor.

It belongs to the diacylglycerol/lipid kinase family. YegS lipid kinase subfamily. Mg(2+) is required as a cofactor. Ca(2+) serves as cofactor.

The protein localises to the cytoplasm. Functionally, probably phosphorylates lipids; the in vivo substrate is unknown. This chain is Probable lipid kinase YegS, found in Escherichia coli (strain K12 / MC4100 / BW2952).